Here is a 219-residue protein sequence, read N- to C-terminus: tRNA (guanine-N(7)-)-methyltransferase (219 aa).

S-adenosyl-L-methionine-binding residues include E43, D68, E101, and N124. Substrate-binding residues include K128 and D160.

Belongs to the class I-like SAM-binding methyltransferase superfamily. TrmB family.

It carries out the reaction guanosine(46) in tRNA + S-adenosyl-L-methionine = N(7)-methylguanosine(46) in tRNA + S-adenosyl-L-homocysteine. Its pathway is tRNA modification; N(7)-methylguanine-tRNA biosynthesis. In terms of biological role, catalyzes the formation of N(7)-methylguanine at position 46 (m7G46) in tRNA. The protein is tRNA (guanine-N(7)-)-methyltransferase of Clostridium botulinum (strain Eklund 17B / Type B).